The primary structure comprises 105 residues: Extracellular guanyl-specific ribonuclease Fl1 (105 aa).

Disulfide bonds link cysteine 5–cysteine 101 and cysteine 23–cysteine 82. The active site involves histidine 39. The active-site Proton acceptor is glutamate 57. Catalysis depends on histidine 90, which acts as the Proton donor.

It belongs to the ribonuclease N1/T1 family.

It catalyses the reaction [RNA] containing guanosine + H2O = an [RNA fragment]-3'-guanosine-3'-phosphate + a 5'-hydroxy-ribonucleotide-3'-[RNA fragment].. This Gibberella baccata (Fusarium lateritium) protein is Extracellular guanyl-specific ribonuclease Fl1.